The primary structure comprises 521 residues: MKEEIDAPVSTDASGTDLENARDQPSGEKPTAVDIYLVEWDGPNDPELPMNFPLWKKSLITCIFSTLTIWVTFSSSVFSAAAGITSKEFHVSVEVMTLGTSLTVLGFTVGPLVWGPMSELYGRLKPLYIGYAIFIIFQVPVAVAQNLETLMLARFFLGFFGTSALAIIPGALADFWGPVERAIAISLFSAATFVGPIFGPIMYVNTMITLVNGVWTRANHDMSSGGFIVDSSLGWRWTAWITMIPASFFGIIAFLTLPETYHPVLLQRRASRLRKETRIWAYHSRLDENTPTFGEILTKYLFRPIQMLFLEPILVCMTIYISLIYGILYLFFVAYPIAFREVRNWKSLGIAALPFLGILVGVLMGCLLVTIATRLWYAPKLQNGSVVPEDRLPPMIVAAILLPIGLFWFGWTSSPSISWAPQAIAGAPIGMGILMIWMQGLNYLIDVYLVVANSAMSANTLIRSAVSAAFPLFATAMYHKLGVDWATSLLGFLSIAMIPIPVIFYFYGAKIRALSRFSPKW.

The disordered stretch occupies residues 1–29 (MKEEIDAPVSTDASGTDLENARDQPSGEK). 8 helical membrane passes run 58–78 (SLITCIFSTLTIWVTFSSSVF), 95–115 (VMTLGTSLTVLGFTVGPLVWG), 124–144 (LKPLYIGYAIFIIFQVPVAVA), 155–175 (FFLGFFGTSALAIIPGALADF), 182–202 (AIAISLFSAATFVGPIFGPIM), 237–257 (WTAWITMIPASFFGIIAFLTL), 313–333 (ILVCMTIYISLIYGILYLFFV), and 349–369 (GIAALPFLGILVGVLMGCLLV). Asn383 is a glycosylation site (N-linked (GlcNAc...) asparagine). 4 consecutive transmembrane segments (helical) span residues 392-412 (LPPMIVAAILLPIGLFWFGWT), 417-437 (ISWAPQAIAGAPIGMGILMIW), 465-485 (AVSAAFPLFATAMYHKLGVDW), and 489-509 (LLGFLSIAMIPIPVIFYFYGA).

This sequence belongs to the major facilitator superfamily. CAR1 family.

It localises to the membrane. In terms of biological role, MFS transporter; part of the gene cluster that mediates the biosynthesis the mycotoxin citrinin, a hepato-nephrotoxic compound to humans due to inhibition of respiration complex III. This chain is Citrinin biosynthesis cluster MFS transporter ctnC (ctnC), found in Monascus purpureus (Red mold).